Reading from the N-terminus, the 150-residue chain is Large ribosomal subunit protein bL9 (150 aa).

It belongs to the bacterial ribosomal protein bL9 family.

In terms of biological role, binds to the 23S rRNA. This chain is Large ribosomal subunit protein bL9, found in Baumannia cicadellinicola subsp. Homalodisca coagulata.